We begin with the raw amino-acid sequence, 263 residues long: Aminoglycoside 3'-phosphotransferase (263 aa).

Asp183 (proton acceptor) is an active-site residue.

Belongs to the aminoglycoside phosphotransferase family.

The enzyme catalyses kanamycin A + ATP = kanamycin 3'-phosphate + ADP + H(+). Its function is as follows. Resistance to kanamycin and structurally-related aminoglycosides, including amikacin. In Streptomyces ribosidificus, this protein is Aminoglycoside 3'-phosphotransferase (rph).